Here is a 1053-residue protein sequence, read N- to C-terminus: DNA-directed RNA polymerase subunit beta' (1053 aa).

Cys-60, Cys-62, Cys-75, and Cys-78 together coordinate Zn(2+). Residues Asp-449, Asp-451, and Asp-453 each contribute to the Mg(2+) site. Residues Cys-818, Cys-892, Cys-899, and Cys-902 each contribute to the Zn(2+) site.

Belongs to the RNA polymerase beta' chain family. The RNAP catalytic core consists of 2 alpha, 1 beta, 1 beta' and 1 omega subunit. When a sigma factor is associated with the core the holoenzyme is formed, which can initiate transcription. Mg(2+) is required as a cofactor. It depends on Zn(2+) as a cofactor.

It catalyses the reaction RNA(n) + a ribonucleoside 5'-triphosphate = RNA(n+1) + diphosphate. In terms of biological role, DNA-dependent RNA polymerase catalyzes the transcription of DNA into RNA using the four ribonucleoside triphosphates as substrates. This is DNA-directed RNA polymerase subunit beta' from Listeria grayi (Listeria murrayi).